We begin with the raw amino-acid sequence, 434 residues long: Nicotinate phosphoribosyltransferase (434 aa).

H242 carries the phosphohistidine; by autocatalysis modification.

It belongs to the NAPRTase family. In terms of processing, transiently phosphorylated on a His residue during the reaction cycle. Phosphorylation strongly increases the affinity for substrates and increases the rate of nicotinate D-ribonucleotide production. Dephosphorylation regenerates the low-affinity form of the enzyme, leading to product release.

It carries out the reaction nicotinate + 5-phospho-alpha-D-ribose 1-diphosphate + ATP + H2O = nicotinate beta-D-ribonucleotide + ADP + phosphate + diphosphate. Its pathway is cofactor biosynthesis; NAD(+) biosynthesis; nicotinate D-ribonucleotide from nicotinate: step 1/1. Its function is as follows. Catalyzes the synthesis of beta-nicotinate D-ribonucleotide from nicotinate and 5-phospho-D-ribose 1-phosphate at the expense of ATP. This is Nicotinate phosphoribosyltransferase from Bradyrhizobium diazoefficiens (strain JCM 10833 / BCRC 13528 / IAM 13628 / NBRC 14792 / USDA 110).